Reading from the N-terminus, the 288-residue chain is Bifunctional protein FolD 2 (288 aa).

Residues 166-168 and serine 191 each bind NADP(+); that span reads GRS.

The protein belongs to the tetrahydrofolate dehydrogenase/cyclohydrolase family. As to quaternary structure, homodimer.

The enzyme catalyses (6R)-5,10-methylene-5,6,7,8-tetrahydrofolate + NADP(+) = (6R)-5,10-methenyltetrahydrofolate + NADPH. The catalysed reaction is (6R)-5,10-methenyltetrahydrofolate + H2O = (6R)-10-formyltetrahydrofolate + H(+). Its pathway is one-carbon metabolism; tetrahydrofolate interconversion. Its function is as follows. Catalyzes the oxidation of 5,10-methylenetetrahydrofolate to 5,10-methenyltetrahydrofolate and then the hydrolysis of 5,10-methenyltetrahydrofolate to 10-formyltetrahydrofolate. This Frankia casuarinae (strain DSM 45818 / CECT 9043 / HFP020203 / CcI3) protein is Bifunctional protein FolD 2.